A 256-amino-acid polypeptide reads, in one-letter code: Small ribosomal subunit protein eS1 (256 aa).

A2 is subject to N-acetylalanine; partial.

It belongs to the eukaryotic ribosomal protein eS1 family. In terms of assembly, component of the small ribosomal subunit. Mature ribosomes consist of a small (40S) and a large (60S) subunit. The 40S subunit contains about 33 different proteins and 1 molecule of RNA (18S). The 60S subunit contains about 49 different proteins and 3 molecules of RNA (25S, 5.8S and 5S).

The protein resides in the cytoplasm. In Candida tropicalis (strain ATCC MYA-3404 / T1) (Yeast), this protein is Small ribosomal subunit protein eS1.